Here is a 613-residue protein sequence, read N- to C-terminus: V-type proton ATPase catalytic subunit A isoform 2 (613 aa).

240-247 (GAFGCGKT) contacts ATP.

It belongs to the ATPase alpha/beta chains family. As to quaternary structure, V-ATPase is a heteromultimeric enzyme composed of a peripheral catalytic V1 complex (main components: subunits A, B, C, D, E, and F) attached to an integral membrane V0 proton pore complex (main component: the proteolipid protein).

The catalysed reaction is ATP + H2O + 4 H(+)(in) = ADP + phosphate + 5 H(+)(out). Functionally, catalytic subunit of the peripheral V1 complex of vacuolar ATPase. V-ATPase vacuolar ATPase is responsible for acidifying a variety of intracellular compartments in eukaryotic cells. This chain is V-type proton ATPase catalytic subunit A isoform 2, found in Acetabularia acetabulum (Mermaid's wine glass).